Reading from the N-terminus, the 195-residue chain is Molybdenum cofactor guanylyltransferase (195 aa).

GTP contacts are provided by residues 12–14 (LAG), Lys25, Asn53, Asp70, and Asp100. Position 100 (Asp100) interacts with Mg(2+).

Belongs to the MobA family. In terms of assembly, monomer. Mg(2+) is required as a cofactor.

The protein localises to the cytoplasm. It carries out the reaction Mo-molybdopterin + GTP + H(+) = Mo-molybdopterin guanine dinucleotide + diphosphate. Functionally, transfers a GMP moiety from GTP to Mo-molybdopterin (Mo-MPT) cofactor (Moco or molybdenum cofactor) to form Mo-molybdopterin guanine dinucleotide (Mo-MGD) cofactor. The polypeptide is Molybdenum cofactor guanylyltransferase (Vibrio parahaemolyticus serotype O3:K6 (strain RIMD 2210633)).